The chain runs to 404 residues: Cysteine desulfurase IscS (404 aa).

Pyridoxal 5'-phosphate-binding positions include 75–76 (AT), asparagine 155, glutamine 183, and 203–205 (SSH). N6-(pyridoxal phosphate)lysine is present on lysine 206. Threonine 243 is a pyridoxal 5'-phosphate binding site. Cysteine 328 acts as the Cysteine persulfide intermediate in catalysis. [2Fe-2S] cluster is bound at residue cysteine 328.

This sequence belongs to the class-V pyridoxal-phosphate-dependent aminotransferase family. NifS/IscS subfamily. Homodimer. Forms a heterotetramer with IscU, interacts with other sulfur acceptors. The cofactor is pyridoxal 5'-phosphate.

It is found in the cytoplasm. The enzyme catalyses (sulfur carrier)-H + L-cysteine = (sulfur carrier)-SH + L-alanine. The protein operates within cofactor biosynthesis; iron-sulfur cluster biosynthesis. Master enzyme that delivers sulfur to a number of partners involved in Fe-S cluster assembly, tRNA modification or cofactor biosynthesis. Catalyzes the removal of elemental sulfur atoms from cysteine to produce alanine. Functions as a sulfur delivery protein for Fe-S cluster synthesis onto IscU, an Fe-S scaffold assembly protein, as well as other S acceptor proteins. This is Cysteine desulfurase IscS from Haemophilus influenzae (strain PittEE).